An 88-amino-acid chain; its full sequence is Large ribosomal subunit protein bL27 (88 aa).

The segment at 1–22 (MAHKKGASSSRNGRDSNAQRLG) is disordered. Polar residues predominate over residues 7–19 (ASSSRNGRDSNAQ).

The protein belongs to the bacterial ribosomal protein bL27 family.

The protein is Large ribosomal subunit protein bL27 of Mycolicibacterium gilvum (strain PYR-GCK) (Mycobacterium gilvum (strain PYR-GCK)).